A 616-amino-acid polypeptide reads, in one-letter code: Dihydroxy-acid dehydratase (616 aa).

Asp-81 contributes to the Mg(2+) binding site. Position 122 (Cys-122) interacts with [2Fe-2S] cluster. Mg(2+)-binding residues include Asp-123 and Lys-124. Lys-124 is subject to N6-carboxylysine. A [2Fe-2S] cluster-binding site is contributed by Cys-195. Glu-491 is a Mg(2+) binding site. Ser-517 (proton acceptor) is an active-site residue.

Belongs to the IlvD/Edd family. In terms of assembly, homodimer. It depends on [2Fe-2S] cluster as a cofactor. Requires Mg(2+) as cofactor.

It carries out the reaction (2R)-2,3-dihydroxy-3-methylbutanoate = 3-methyl-2-oxobutanoate + H2O. The catalysed reaction is (2R,3R)-2,3-dihydroxy-3-methylpentanoate = (S)-3-methyl-2-oxopentanoate + H2O. It participates in amino-acid biosynthesis; L-isoleucine biosynthesis; L-isoleucine from 2-oxobutanoate: step 3/4. Its pathway is amino-acid biosynthesis; L-valine biosynthesis; L-valine from pyruvate: step 3/4. Its function is as follows. Functions in the biosynthesis of branched-chain amino acids. Catalyzes the dehydration of (2R,3R)-2,3-dihydroxy-3-methylpentanoate (2,3-dihydroxy-3-methylvalerate) into 2-oxo-3-methylpentanoate (2-oxo-3-methylvalerate) and of (2R)-2,3-dihydroxy-3-methylbutanoate (2,3-dihydroxyisovalerate) into 2-oxo-3-methylbutanoate (2-oxoisovalerate), the penultimate precursor to L-isoleucine and L-valine, respectively. In Edwardsiella ictaluri (strain 93-146), this protein is Dihydroxy-acid dehydratase.